The following is a 49-amino-acid chain: Large ribosomal subunit protein eL40 (49 aa).

Belongs to the eukaryotic ribosomal protein eL40 family.

In Halorubrum lacusprofundi (strain ATCC 49239 / DSM 5036 / JCM 8891 / ACAM 34), this protein is Large ribosomal subunit protein eL40.